Reading from the N-terminus, the 103-residue chain is Cell division suppressor protein YneA (103 aa).

Residues 36-87 enclose the LysM domain; the sequence is VKIEVQSGDTLWGLADQVNDSKSIDKNAFIDWVTQHNDLASTEIQPGDILVI.

The protein belongs to the YneA family.

It is found in the cytoplasm. Functionally, inhibits cell division during the SOS response. Affects a later stage of the cell division protein assembly, after the assembly of the Z ring, by probably suppressing recruitment of FtsL and/or DivIC to the division machinery. This is Cell division suppressor protein YneA from Bacillus pumilus (strain SAFR-032).